A 100-amino-acid chain; its full sequence is Tuberoinfundibular peptide of 39 residues (100 aa).

Residues 1–30 (METCQMSRSPRERLLLLLLLLLLVPWGTGP) form the signal peptide. Residues 31-59 (ASGVALPLAGVFSLRAPGRAWAGLGSPLS) constitute a propeptide that is removed on maturation.

Belongs to the parathyroid hormone family. In terms of assembly, ligand of high affinity for the PTH2 receptor (PTH2R). In terms of tissue distribution, expressed in testis and, less abundantly, in liver and kidney. Expressed in seminiferous tubuli and several brain regions, including nucleus ruber, caudal paralemniscal nucleus, nucleus centralis pontis, and nucleus subparafascicularis thalami. Expressed in neurons of cerebral cortex and subcortical areas. Expressed in Purkinje cells of cerebellum.

The protein localises to the secreted. Its function is as follows. Plays a role as a potent and selective agonist of PTH2R resulting in adenyl cyclase activation and intracellular calcium levels elevation. Induces protein kinase C beta activation, recruitment of beta-arrestin and PTH2R internalization. May inhibit cell proliferation via its action of PTH2R activation. Neuropeptide which may also have a role in spermatogenesis. May activate nociceptors and nociceptive circuits. This chain is Tuberoinfundibular peptide of 39 residues (Pth2), found in Mus musculus (Mouse).